The sequence spans 459 residues: tRNA modification GTPase MnmE (459 aa).

Arg29, Glu91, and Arg130 together coordinate (6S)-5-formyl-5,6,7,8-tetrahydrofolate. Residues 225-381 (GVKVAIVGRP…LEEALEQLVT (157 aa)) enclose the TrmE-type G domain. Asn235 contributes to the K(+) binding site. Residues 235–240 (NVGKSS), 254–260 (TDLPGTT), and 279–282 (DTAG) each bind GTP. Residue Ser239 coordinates Mg(2+). K(+) is bound by residues Thr254, Leu256, and Thr259. A Mg(2+)-binding site is contributed by Thr260. Position 459 (Lys459) interacts with (6S)-5-formyl-5,6,7,8-tetrahydrofolate.

This sequence belongs to the TRAFAC class TrmE-Era-EngA-EngB-Septin-like GTPase superfamily. TrmE GTPase family. Homodimer. Heterotetramer of two MnmE and two MnmG subunits. K(+) serves as cofactor.

It is found in the cytoplasm. Exhibits a very high intrinsic GTPase hydrolysis rate. Involved in the addition of a carboxymethylaminomethyl (cmnm) group at the wobble position (U34) of certain tRNAs, forming tRNA-cmnm(5)s(2)U34. The chain is tRNA modification GTPase MnmE from Synechococcus sp. (strain JA-3-3Ab) (Cyanobacteria bacterium Yellowstone A-Prime).